The chain runs to 501 residues: Lysine--tRNA ligase (501 aa).

Mg(2+) is bound by residues Asp-411 and Glu-418.

Belongs to the class-II aminoacyl-tRNA synthetase family. Homodimer. Mg(2+) is required as a cofactor.

It is found in the cytoplasm. The catalysed reaction is tRNA(Lys) + L-lysine + ATP = L-lysyl-tRNA(Lys) + AMP + diphosphate. The chain is Lysine--tRNA ligase from Mycolicibacterium gilvum (strain PYR-GCK) (Mycobacterium gilvum (strain PYR-GCK)).